A 260-amino-acid polypeptide reads, in one-letter code: Malonyl-[acyl-carrier protein] O-methyltransferase (260 aa).

Belongs to the methyltransferase superfamily.

The enzyme catalyses malonyl-[ACP] + S-adenosyl-L-methionine = malonyl-[ACP] methyl ester + S-adenosyl-L-homocysteine. Its pathway is cofactor biosynthesis; biotin biosynthesis. Its function is as follows. Converts the free carboxyl group of a malonyl-thioester to its methyl ester by transfer of a methyl group from S-adenosyl-L-methionine (SAM). It allows to synthesize pimeloyl-ACP via the fatty acid synthetic pathway. This Herminiimonas arsenicoxydans protein is Malonyl-[acyl-carrier protein] O-methyltransferase.